Consider the following 720-residue polypeptide: Secreted RxLR effector protein 138 (720 aa).

The signal sequence occupies residues Met1–Ala20. Positions Arg56–Arg71 match the RxLR-dEER motif. Positions Glu264–Asp335 are disordered. Basic and acidic residues predominate over residues Lys320–Asp335. The N-linked (GlcNAc...) asparagine glycan is linked to Asn609.

This sequence belongs to the RxLR effector family.

The protein localises to the secreted. Its subcellular location is the host nucleus. Functionally, secreted effector that acts as an elicitor that induces cell death in host plant cells. The chain is Secreted RxLR effector protein 138 from Plasmopara viticola (Downy mildew of grapevine).